The following is a 229-amino-acid chain: MNPRVIRLWLPSAVLLSLVPGHFPVRGPSTVTGTVGESLSVSCQYEKKLKTKKKIWCKWKSNVLCKDIVKTSASEEARNGRVSIRDHPDNLTFTVTLENLTLEDAGTYMCMVDIGFFYDAYLQIDKSFKVEVFVVPGKPPFKGSRPGNGINILASPTSSAVHTQPNVTTDDTIPAPSPELRSLLSSPHFWILVSLKLPLFLSMLGALLWVNRPQRCSGGSSAWPCYENQ.

Positions 1 to 21 (MNPRVIRLWLPSAVLLSLVPG) are cleaved as a signal peptide. In terms of domain architecture, Ig-like V-type spans 22–126 (HFPVRGPSTV…FYDAYLQIDK (105 aa)). Residues 22 to 188 (HFPVRGPSTV…ELRSLLSSPH (167 aa)) are Extracellular-facing. Cys-43 and Cys-110 are joined by a disulfide. Residues Asn-90 and Asn-99 are each glycosylated (N-linked (GlcNAc...) asparagine). The helical transmembrane segment at 189–209 (FWILVSLKLPLFLSMLGALLW) threads the bilayer. Residues 210–229 (VNRPQRCSGGSSAWPCYENQ) are Cytoplasmic-facing.

It belongs to the CD300 family.

Its subcellular location is the cell membrane. This chain is CMRF35-like molecule 6 (Cd300c), found in Mus musculus (Mouse).